Here is a 196-residue protein sequence, read N- to C-terminus: Translation machinery-associated protein 22 (196 aa).

The 72-residue stretch at 97 to 168 (VIVKREARTK…EVVAYIHSLL (72 aa)) folds into the SUI1 domain.

Belongs to the DENR family. As to quaternary structure, interacts with the 40S ribosomal subunit.

It localises to the cytoplasm. This is Translation machinery-associated protein 22 (TMA22) from Candida glabrata (strain ATCC 2001 / BCRC 20586 / JCM 3761 / NBRC 0622 / NRRL Y-65 / CBS 138) (Yeast).